The sequence spans 445 residues: Phosphoglucosamine mutase (445 aa).

The active-site Phosphoserine intermediate is the serine 101. Residues serine 101, aspartate 240, aspartate 242, and aspartate 244 each contribute to the Mg(2+) site. Serine 101 bears the Phosphoserine mark.

It belongs to the phosphohexose mutase family. The cofactor is Mg(2+). In terms of processing, activated by phosphorylation.

The enzyme catalyses alpha-D-glucosamine 1-phosphate = D-glucosamine 6-phosphate. Its function is as follows. Catalyzes the conversion of glucosamine-6-phosphate to glucosamine-1-phosphate. In Ectopseudomonas mendocina (strain ymp) (Pseudomonas mendocina), this protein is Phosphoglucosamine mutase.